The chain runs to 104 residues: MAAKIRREDEVIVLAGKDQGKRGKVSQVLPTGKLIVEGINLVKKHQKPNPQLGVAGGIVEQEAPIQASNVAIFNSATGKADRVGFRFEDGQKVRFFKSNSELVK.

This sequence belongs to the universal ribosomal protein uL24 family. Part of the 50S ribosomal subunit.

Functionally, one of two assembly initiator proteins, it binds directly to the 5'-end of the 23S rRNA, where it nucleates assembly of the 50S subunit. One of the proteins that surrounds the polypeptide exit tunnel on the outside of the subunit. The chain is Large ribosomal subunit protein uL24 from Shewanella sediminis (strain HAW-EB3).